The chain runs to 202 residues: Securin (202 aa).

The residue at position 2 (A2) is an N-acetylalanine. Residues 35–90 (LDGRSQVSTPRFGKTFDAPPALPKATRKALGTVNRATEKSVKTKGPLKQKQPSFSA) are disordered. The D-box signature appears at 61 to 64 (RKAL). 2 consecutive short sequence motifs (TEK-box) follow at residues 71-73 (TEK) and 94-96 (TEK). The SH3-binding signature appears at 163 to 173 (PPSPVKMPSPP). S165 carries the phosphoserine; by CDK1 modification.

It belongs to the securin family. As to quaternary structure, interacts with RPS10 and DNAJA1. Interacts with the caspase-like ESPL1, and prevents its protease activity probably by covering its active site. Interacts with TP53 and blocks its activity probably by blocking its binding to DNA. Interacts with the Ku 70 kDa subunit of ds-DNA kinase. Interacts with PTTG1IP. In terms of processing, phosphorylated at Ser-165 by CDK1 during mitosis. Phosphorylated in vitro by ds-DNA kinase. Post-translationally, ubiquitinated through 'Lys-11' linkage of ubiquitin moieties by the anaphase promoting complex (APC) at the onset of anaphase, conducting to its degradation. 'Lys-11'-linked ubiquitination is mediated by the E2 ligase UBE2C/UBCH10. As to expression, expressed at low level in most tissues, except in adult testis, where it is highly expressed. Overexpressed in many patients suffering from pituitary adenomas, primary epithelial neoplasias, and esophageal cancer.

Its subcellular location is the cytoplasm. The protein resides in the nucleus. In terms of biological role, regulatory protein, which plays a central role in chromosome stability, in the p53/TP53 pathway, and DNA repair. Probably acts by blocking the action of key proteins. During the mitosis, it blocks Separase/ESPL1 function, preventing the proteolysis of the cohesin complex and the subsequent segregation of the chromosomes. At the onset of anaphase, it is ubiquitinated, conducting to its destruction and to the liberation of ESPL1. Its function is however not limited to a blocking activity, since it is required to activate ESPL1. Negatively regulates the transcriptional activity and related apoptosis activity of TP53. The negative regulation of TP53 may explain the strong transforming capability of the protein when it is overexpressed. May also play a role in DNA repair via its interaction with Ku, possibly by connecting DNA damage-response pathways with sister chromatid separation. This Homo sapiens (Human) protein is Securin (PTTG1).